A 495-amino-acid chain; its full sequence is PXA domain protein 1 (495 aa).

A PXA domain is found at 1–174; the sequence is MAKLSSLLNP…KFIIYLSKAI (174 aa). The next 2 membrane-spanning stretches (helical) occupy residues 7-27 and 235-255; these read LLNPIISKILEIYVYSWYSGI and WFFFYTLLYPWIALVSAFVAE. 2 stretches are compositionally biased toward polar residues: residues 402–419 and 427–436; these read AVSSPTKANTNKSHQRSF and DSQTPSENSA. Residues 402–436 are disordered; the sequence is AVSSPTKANTNKSHQRSFSIPKATKDSQTPSENSA. Residues 446-466 form a helical membrane-spanning segment; the sequence is AYSQIPVIPFFLPSDKLIMLV.

It localises to the endosome membrane. Its function is as follows. Required for required for normal vacuolar morphology and for vacuolar protein transport. Also required for endosome-to-Golgi protein transport. The polypeptide is PXA domain protein 1 (pxa1) (Schizosaccharomyces pombe (strain 972 / ATCC 24843) (Fission yeast)).